Here is a 213-residue protein sequence, read N- to C-terminus: Probable septum site-determining protein MinC (213 aa).

This sequence belongs to the MinC family. In terms of assembly, interacts with MinD and FtsZ.

Functionally, cell division inhibitor that blocks the formation of polar Z ring septums. Rapidly oscillates between the poles of the cell to destabilize FtsZ filaments that have formed before they mature into polar Z rings. Prevents FtsZ polymerization. In Clostridium botulinum (strain Eklund 17B / Type B), this protein is Probable septum site-determining protein MinC.